A 100-amino-acid polypeptide reads, in one-letter code: Large ribosomal subunit protein uL23 (100 aa).

It belongs to the universal ribosomal protein uL23 family. As to quaternary structure, part of the 50S ribosomal subunit. Contacts protein L29, and trigger factor when it is bound to the ribosome.

In terms of biological role, one of the early assembly proteins it binds 23S rRNA. One of the proteins that surrounds the polypeptide exit tunnel on the outside of the ribosome. Forms the main docking site for trigger factor binding to the ribosome. In Mycolicibacterium vanbaalenii (strain DSM 7251 / JCM 13017 / BCRC 16820 / KCTC 9966 / NRRL B-24157 / PYR-1) (Mycobacterium vanbaalenii), this protein is Large ribosomal subunit protein uL23.